Here is a 324-residue protein sequence, read N- to C-terminus: Tubulin alpha-8 chain (324 aa).

Residues Ser15, Gly19, Thr20, Thr54, Asn81, and Asn103 each coordinate GTP. Residue Glu129 is part of the active site.

This sequence belongs to the tubulin family. As to quaternary structure, dimer of alpha and beta chains. A typical microtubule is a hollow water-filled tube with an outer diameter of 25 nm and an inner diameter of 15 nM. Alpha-beta heterodimers associate head-to-tail to form protofilaments running lengthwise along the microtubule wall with the beta-tubulin subunit facing the microtubule plus end conferring a structural polarity. Microtubules usually have 13 protofilaments but different protofilament numbers can be found in some organisms and specialized cells. Mg(2+) serves as cofactor. Some glutamate residues at the C-terminus are polyglycylated, resulting in polyglycine chains on the gamma-carboxyl group. Glycylation is mainly limited to tubulin incorporated into axonemes (cilia and flagella) whereas glutamylation is prevalent in neuronal cells, centrioles, axonemes, and the mitotic spindle. Both modifications can coexist on the same protein on adjacent residues, and lowering polyglycylation levels increases polyglutamylation, and reciprocally. The precise function of polyglycylation is still unclear. Post-translationally, some glutamate residues at the C-terminus are polyglutamylated, resulting in polyglutamate chains on the gamma-carboxyl group. Polyglutamylation plays a key role in microtubule severing by spastin (SPAST). SPAST preferentially recognizes and acts on microtubules decorated with short polyglutamate tails: severing activity by SPAST increases as the number of glutamates per tubulin rises from one to eight, but decreases beyond this glutamylation threshold.

It is found in the cytoplasm. Its subcellular location is the cytoskeleton. It catalyses the reaction GTP + H2O = GDP + phosphate + H(+). Functionally, tubulin is the major constituent of microtubules, a cylinder consisting of laterally associated linear protofilaments composed of alpha- and beta-tubulin heterodimers. Microtubules grow by the addition of GTP-tubulin dimers to the microtubule end, where a stabilizing cap forms. Below the cap, tubulin dimers are in GDP-bound state, owing to GTPase activity of alpha-tubulin. The polypeptide is Tubulin alpha-8 chain (Gallus gallus (Chicken)).